Consider the following 302-residue polypeptide: Protoheme IX farnesyltransferase (302 aa).

9 consecutive transmembrane segments (helical) span residues 27 to 47 (VLTL…QSIH), 48 to 68 (PVLG…AGAL), 97 to 117 (SALH…GLAL), 119 to 139 (VLAA…YTIW), 148 to 168 (IVIG…AATG), 176 to 196 (LLFA…ALFI), 219 to 239 (IQIM…WAMG), 240 to 260 (LTGA…LLLA), and 280 to 300 (LFGF…ADKV).

This sequence belongs to the UbiA prenyltransferase family. Protoheme IX farnesyltransferase subfamily.

The protein localises to the cell inner membrane. It carries out the reaction heme b + (2E,6E)-farnesyl diphosphate + H2O = Fe(II)-heme o + diphosphate. It participates in porphyrin-containing compound metabolism; heme O biosynthesis; heme O from protoheme: step 1/1. Functionally, converts heme B (protoheme IX) to heme O by substitution of the vinyl group on carbon 2 of heme B porphyrin ring with a hydroxyethyl farnesyl side group. This is Protoheme IX farnesyltransferase from Rhizorhabdus wittichii (strain DSM 6014 / CCUG 31198 / JCM 15750 / NBRC 105917 / EY 4224 / RW1) (Sphingomonas wittichii).